The primary structure comprises 861 residues: Homeobox-leucine zipper protein HOX29 (861 aa).

The homeobox DNA-binding region spans 2-65 (DASKYVRYTP…NRRCREKQRK (64 aa)). The stretch at 57–99 (RRCREKQRKESSRLQALNRKLTAMNKLLMEENDRLQKQVSQLV) forms a coiled coil. In terms of domain architecture, START spans 162 to 390 (RDASPAGLMS…VAHEDTRSVI (229 aa)).

Belongs to the HD-ZIP homeobox family. Class III subfamily. As to expression, expressed in roots, stems and leaf blades.

The protein resides in the nucleus. In terms of biological role, probable transcription factor. In Oryza sativa subsp. indica (Rice), this protein is Homeobox-leucine zipper protein HOX29 (HOX29).